A 157-amino-acid chain; its full sequence is Cyclic pyranopterin monophosphate synthase (157 aa).

Residues 74–76 (MCH) and 112–113 (ME) contribute to the substrate site. Asp-127 is an active-site residue.

This sequence belongs to the MoaC family. In terms of assembly, homohexamer; trimer of dimers.

The catalysed reaction is (8S)-3',8-cyclo-7,8-dihydroguanosine 5'-triphosphate = cyclic pyranopterin phosphate + diphosphate. Its pathway is cofactor biosynthesis; molybdopterin biosynthesis. Its function is as follows. Catalyzes the conversion of (8S)-3',8-cyclo-7,8-dihydroguanosine 5'-triphosphate to cyclic pyranopterin monophosphate (cPMP). This chain is Cyclic pyranopterin monophosphate synthase, found in Syntrophomonas wolfei subsp. wolfei (strain DSM 2245B / Goettingen).